Reading from the N-terminus, the 408-residue chain is Serine/threonine transporter SstT (408 aa).

A run of 9 helical transmembrane segments spans residues 11-31 (LANG…VALA), 43-63 (FLGS…VFIL), 82-102 (IVVL…ILSM), 141-161 (ALMT…GLAL), 192-212 (IGIF…AIAG), 216-236 (LLAV…PLIV), 290-310 (IPLG…VLTL), 316-336 (LGIQ…AISA), and 363-383 (VAMQ…AAET).

Belongs to the dicarboxylate/amino acid:cation symporter (DAACS) (TC 2.A.23) family.

The protein localises to the cell inner membrane. It carries out the reaction L-serine(in) + Na(+)(in) = L-serine(out) + Na(+)(out). It catalyses the reaction L-threonine(in) + Na(+)(in) = L-threonine(out) + Na(+)(out). Functionally, involved in the import of serine and threonine into the cell, with the concomitant import of sodium (symport system). This is Serine/threonine transporter SstT from Shewanella oneidensis (strain ATCC 700550 / JCM 31522 / CIP 106686 / LMG 19005 / NCIMB 14063 / MR-1).